Consider the following 51-residue polypeptide: Ovomucoid (51 aa).

Residues 3 to 51 (VDCSGYPKPACTLEYFPLCGSDNQTYANKCAFCNAVVEKNVTLRHLGKC) form the Kazal-like domain. 3 cysteine pairs are disulfide-bonded: C5–C35, C13–C32, and C21–C51. N-linked (GlcNAc...) asparagine glycosylation is present at N42.

Its subcellular location is the secreted. The sequence is that of Ovomucoid from Nothoprocta cinerascens (Brushland tinamou).